The following is a 246-amino-acid chain: 3'(2'),5'-bisphosphate nucleotidase CysQ (246 aa).

Positions 64, 83, 85, 86, and 205 each coordinate Mg(2+). Residue glutamate 64 coordinates substrate. Residues 85-88 (LDGT) and aspartate 205 each bind substrate.

Belongs to the inositol monophosphatase superfamily. CysQ family. It depends on Mg(2+) as a cofactor.

The protein resides in the cell inner membrane. The catalysed reaction is adenosine 3',5'-bisphosphate + H2O = AMP + phosphate. Its function is as follows. Converts adenosine-3',5'-bisphosphate (PAP) to AMP. In Salmonella typhimurium (strain LT2 / SGSC1412 / ATCC 700720), this protein is 3'(2'),5'-bisphosphate nucleotidase CysQ.